The chain runs to 176 residues: MMGGEAPELSAQERAGKAFPVSWDQFHRDCRALTWRLNEVGPFHAVIAITRGGLVPAAIVARELGVRVIDTVCIASYDHNKQGELQVLKGISEAAMKLGGGTGKGLLIVDDLVDTGKTGKLVREMLPDAHFATVYAKPKGRPLVDTYITEVSQDTWIFFPWDTALSYHPPLRDGAA.

Residues 51 to 52 and 110 to 118 each bind 5-phospho-alpha-D-ribose 1-diphosphate; these read RG and DDLVDTGKT. Asp111 provides a ligand contact to Mg(2+). Guanine is bound by residues Asp114 and Ile157. Xanthine is bound by residues Asp114 and Ile157. GMP-binding positions include 114-118 and 156-157; these read DTGKT and WI.

This sequence belongs to the purine/pyrimidine phosphoribosyltransferase family. XGPT subfamily. In terms of assembly, homotetramer. The cofactor is Mg(2+).

The protein localises to the cell inner membrane. It carries out the reaction GMP + diphosphate = guanine + 5-phospho-alpha-D-ribose 1-diphosphate. The catalysed reaction is XMP + diphosphate = xanthine + 5-phospho-alpha-D-ribose 1-diphosphate. It catalyses the reaction IMP + diphosphate = hypoxanthine + 5-phospho-alpha-D-ribose 1-diphosphate. The protein operates within purine metabolism; GMP biosynthesis via salvage pathway; GMP from guanine: step 1/1. It functions in the pathway purine metabolism; XMP biosynthesis via salvage pathway; XMP from xanthine: step 1/1. In terms of biological role, purine salvage pathway enzyme that catalyzes the transfer of the ribosyl-5-phosphate group from 5-phospho-alpha-D-ribose 1-diphosphate (PRPP) to the N9 position of the 6-oxopurines guanine and xanthine to form the corresponding ribonucleotides GMP (guanosine 5'-monophosphate) and XMP (xanthosine 5'-monophosphate), with the release of PPi. To a lesser extent, also acts on hypoxanthine. This Bradyrhizobium diazoefficiens (strain JCM 10833 / BCRC 13528 / IAM 13628 / NBRC 14792 / USDA 110) protein is Xanthine-guanine phosphoribosyltransferase.